We begin with the raw amino-acid sequence, 222 residues long: Deoxyribose-phosphate aldolase (222 aa).

Asp-89 serves as the catalytic Proton donor/acceptor. Lys-152 acts as the Schiff-base intermediate with acetaldehyde in catalysis. The active-site Proton donor/acceptor is Lys-181.

The protein belongs to the DeoC/FbaB aldolase family. DeoC type 1 subfamily.

It is found in the cytoplasm. The enzyme catalyses 2-deoxy-D-ribose 5-phosphate = D-glyceraldehyde 3-phosphate + acetaldehyde. Its pathway is carbohydrate degradation; 2-deoxy-D-ribose 1-phosphate degradation; D-glyceraldehyde 3-phosphate and acetaldehyde from 2-deoxy-alpha-D-ribose 1-phosphate: step 2/2. In terms of biological role, catalyzes a reversible aldol reaction between acetaldehyde and D-glyceraldehyde 3-phosphate to generate 2-deoxy-D-ribose 5-phosphate. This is Deoxyribose-phosphate aldolase from Alkaliphilus oremlandii (strain OhILAs) (Clostridium oremlandii (strain OhILAs)).